Reading from the N-terminus, the 103-residue chain is uncharacterized protein (103 aa).

This is an uncharacterized protein from Bacillus subtilis (strain 168).